The following is a 461-amino-acid chain: Argininosuccinate lyase (461 aa).

The protein belongs to the lyase 1 family. Argininosuccinate lyase subfamily.

The protein resides in the cytoplasm. It carries out the reaction 2-(N(omega)-L-arginino)succinate = fumarate + L-arginine. The protein operates within amino-acid biosynthesis; L-arginine biosynthesis; L-arginine from L-ornithine and carbamoyl phosphate: step 3/3. The polypeptide is Argininosuccinate lyase (Nitrosomonas eutropha (strain DSM 101675 / C91 / Nm57)).